Consider the following 333-residue polypeptide: 4-hydroxy-3-methylbut-2-enyl diphosphate reductase (333 aa).

[4Fe-4S] cluster is bound at residue Cys-34. Positions 63 and 96 each coordinate (2E)-4-hydroxy-3-methylbut-2-enyl diphosphate. The dimethylallyl diphosphate site is built by His-63 and His-96. Isopentenyl diphosphate is bound by residues His-63 and His-96. Cys-118 contacts [4Fe-4S] cluster. His-146 provides a ligand contact to (2E)-4-hydroxy-3-methylbut-2-enyl diphosphate. His-146 contacts dimethylallyl diphosphate. An isopentenyl diphosphate-binding site is contributed by His-146. Glu-148 functions as the Proton donor in the catalytic mechanism. A (2E)-4-hydroxy-3-methylbut-2-enyl diphosphate-binding site is contributed by Thr-186. Cys-216 provides a ligand contact to [4Fe-4S] cluster. The (2E)-4-hydroxy-3-methylbut-2-enyl diphosphate site is built by Ser-244, Ser-245, Asn-246, and Ser-289. Residues Ser-244, Ser-245, Asn-246, and Ser-289 each contribute to the dimethylallyl diphosphate site. Residues Ser-244, Ser-245, Asn-246, and Ser-289 each contribute to the isopentenyl diphosphate site.

This sequence belongs to the IspH family. [4Fe-4S] cluster serves as cofactor.

The enzyme catalyses isopentenyl diphosphate + 2 oxidized [2Fe-2S]-[ferredoxin] + H2O = (2E)-4-hydroxy-3-methylbut-2-enyl diphosphate + 2 reduced [2Fe-2S]-[ferredoxin] + 2 H(+). It carries out the reaction dimethylallyl diphosphate + 2 oxidized [2Fe-2S]-[ferredoxin] + H2O = (2E)-4-hydroxy-3-methylbut-2-enyl diphosphate + 2 reduced [2Fe-2S]-[ferredoxin] + 2 H(+). It participates in isoprenoid biosynthesis; dimethylallyl diphosphate biosynthesis; dimethylallyl diphosphate from (2E)-4-hydroxy-3-methylbutenyl diphosphate: step 1/1. The protein operates within isoprenoid biosynthesis; isopentenyl diphosphate biosynthesis via DXP pathway; isopentenyl diphosphate from 1-deoxy-D-xylulose 5-phosphate: step 6/6. Functionally, catalyzes the conversion of 1-hydroxy-2-methyl-2-(E)-butenyl 4-diphosphate (HMBPP) into a mixture of isopentenyl diphosphate (IPP) and dimethylallyl diphosphate (DMAPP). Acts in the terminal step of the DOXP/MEP pathway for isoprenoid precursor biosynthesis. This Mycobacterium sp. (strain JLS) protein is 4-hydroxy-3-methylbut-2-enyl diphosphate reductase.